Here is a 475-residue protein sequence, read N- to C-terminus: 23S rRNA (uracil(1939)-C(5))-methyltransferase RlmD (475 aa).

Residues Met1 to Pro10 show a composition bias toward basic residues. Positions Met1–Asp33 are disordered. Over residues Ala13–Ala30 the composition is skewed to basic and acidic residues. The TRAM domain occupies Arg26–Glu85. Positions 98, 104, 107, and 183 each coordinate [4Fe-4S] cluster. Positions 294, 323, 328, 344, 371, and 388 each coordinate S-adenosyl-L-methionine. Residue Cys414 is the Nucleophile of the active site. Residues Thr455–Pro475 form a disordered region. Basic and acidic residues predominate over residues Asp457–Pro475.

This sequence belongs to the class I-like SAM-binding methyltransferase superfamily. RNA M5U methyltransferase family. RlmD subfamily.

It carries out the reaction uridine(1939) in 23S rRNA + S-adenosyl-L-methionine = 5-methyluridine(1939) in 23S rRNA + S-adenosyl-L-homocysteine + H(+). In terms of biological role, catalyzes the formation of 5-methyl-uridine at position 1939 (m5U1939) in 23S rRNA. The chain is 23S rRNA (uracil(1939)-C(5))-methyltransferase RlmD from Chromohalobacter salexigens (strain ATCC BAA-138 / DSM 3043 / CIP 106854 / NCIMB 13768 / 1H11).